The sequence spans 504 residues: Anaerobic nitric oxide reductase transcription regulator NorR (504 aa).

4-aspartylphosphate is present on Asp-57. The Sigma-54 factor interaction domain occupies 187–416 (MIGLSPGMTQ…LEHAIHRAVV (230 aa)). ATP contacts are provided by residues 215–222 (GETGTGKE) and 278–287 (ADNGTLFLDE). Residues 479–498 (WAACARMLETDVANLHRLAK) constitute a DNA-binding region (H-T-H motif).

It participates in nitrogen metabolism; nitric oxide reduction. Functionally, required for the expression of anaerobic nitric oxide (NO) reductase, acts as a transcriptional activator for at least the norVW operon. Activation also requires sigma-54. The polypeptide is Anaerobic nitric oxide reductase transcription regulator NorR (Escherichia coli O8 (strain IAI1)).